The primary structure comprises 205 residues: RNA pyrophosphohydrolase (205 aa).

One can recognise a Nudix hydrolase domain in the interval 6 to 149; sequence GFRPNVGIVL…KRGVYARALR (144 aa). The short motif at 38-59 is the Nudix box element; that stretch reads GGMNTDETPVEAMYRELREETG. The disordered stretch occupies residues 178 to 205; it reads GSSAAGHDSPRKRPRKRNGARAMRINND. Residues 187–196 are compositionally biased toward basic residues; sequence PRKRPRKRNG.

Belongs to the Nudix hydrolase family. RppH subfamily. A divalent metal cation serves as cofactor.

In terms of biological role, accelerates the degradation of transcripts by removing pyrophosphate from the 5'-end of triphosphorylated RNA, leading to a more labile monophosphorylated state that can stimulate subsequent ribonuclease cleavage. This Xanthomonas axonopodis pv. citri (strain 306) protein is RNA pyrophosphohydrolase.